A 126-amino-acid chain; its full sequence is Hydrogenase maturation factor HypA (126 aa).

Histidine 2 contributes to the Ni(2+) binding site. Residues cysteine 78, cysteine 81, cysteine 97, and cysteine 100 each contribute to the Zn(2+) site.

It belongs to the HypA/HybF family.

Involved in the maturation of [NiFe] hydrogenases. Required for nickel insertion into the metal center of the hydrogenase. In Methanococcus maripaludis (strain DSM 14266 / JCM 13030 / NBRC 101832 / S2 / LL), this protein is Hydrogenase maturation factor HypA.